We begin with the raw amino-acid sequence, 139 residues long: Small ribosomal subunit protein uS12 (139 aa).

Residues 12–55 are disordered; it reads RVDKVKKSDSPALNKGYNSFKKSQTDVSSPQKRGVCTRVGTMTP. Residues 27–42 show a composition bias toward polar residues; the sequence is GYNSFKKSQTDVSSPQ. D102 is modified (3-methylthioaspartic acid). Residues 119–139 form a disordered region; it reads GVQNRMQGRSKYGTKKPKDKK. Residues 130–139 show a composition bias toward basic residues; it reads YGTKKPKDKK.

Belongs to the universal ribosomal protein uS12 family. As to quaternary structure, part of the 30S ribosomal subunit. Contacts proteins S8 and S17. May interact with IF1 in the 30S initiation complex.

With S4 and S5 plays an important role in translational accuracy. Its function is as follows. Interacts with and stabilizes bases of the 16S rRNA that are involved in tRNA selection in the A site and with the mRNA backbone. Located at the interface of the 30S and 50S subunits, it traverses the body of the 30S subunit contacting proteins on the other side and probably holding the rRNA structure together. The combined cluster of proteins S8, S12 and S17 appears to hold together the shoulder and platform of the 30S subunit. In Shouchella clausii (strain KSM-K16) (Alkalihalobacillus clausii), this protein is Small ribosomal subunit protein uS12.